Reading from the N-terminus, the 37-residue chain is Mu-agatoxin-Aa1e (37 aa).

Intrachain disulfides connect Cys-2–Cys-18, Cys-9–Cys-23, Cys-17–Cys-33, and Cys-25–Cys-31. Asn-37 is modified (asparagine amide).

This sequence belongs to the neurotoxin 07 (Beta/delta-agtx) family. 03 (aga-4) subfamily. Aga sub-subfamily. As to expression, expressed by the venom gland.

Its subcellular location is the secreted. Insecticidal neurotoxin that induces an irreversible spastic paralysis when injected into insects. Modifies presynaptic voltage-gated sodium channels (Nav), causing them to open at the normal resting potential of the nerve. This leads to spontaneous release of neurotransmitter and repetitive action potentials in motor neurons. The protein is Mu-agatoxin-Aa1e of Agelenopsis aperta (North American funnel-web spider).